The following is a 263-amino-acid chain: Oxygen-evolving enhancer protein 2-1, chloroplastic (263 aa).

Phosphoserine is present on Ser153.

Belongs to the PsbP family. As to quaternary structure, interacts with WAK1.

The protein localises to the plastid. The protein resides in the chloroplast thylakoid lumen. Its function is as follows. May be involved in the regulation of photosystem II. This chain is Oxygen-evolving enhancer protein 2-1, chloroplastic (PSBP1), found in Arabidopsis thaliana (Mouse-ear cress).